Consider the following 186-residue polypeptide: Ribosome-recycling factor (186 aa).

This sequence belongs to the RRF family.

The protein resides in the cytoplasm. Responsible for the release of ribosomes from messenger RNA at the termination of protein biosynthesis. May increase the efficiency of translation by recycling ribosomes from one round of translation to another. The polypeptide is Ribosome-recycling factor (Burkholderia lata (strain ATCC 17760 / DSM 23089 / LMG 22485 / NCIMB 9086 / R18194 / 383)).